Consider the following 143-residue polypeptide: Small ribosomal subunit protein eS12 (143 aa).

Glycyl lysine isopeptide (Lys-Gly) (interchain with G-Cter in ubiquitin) cross-links involve residues K85, K95, and K114.

Belongs to the eukaryotic ribosomal protein eS12 family. Component of the small ribosomal subunit (SSU). Mature yeast ribosomes consist of a small (40S) and a large (60S) subunit. The 40S small subunit contains 1 molecule of ribosomal RNA (18S rRNA) and 33 different proteins (encoded by 57 genes). The large 60S subunit contains 3 rRNA molecules (25S, 5.8S and 5S rRNA) and 46 different proteins (encoded by 81 genes).

The protein localises to the cytoplasm. In terms of biological role, component of the ribosome, a large ribonucleoprotein complex responsible for the synthesis of proteins in the cell. The small ribosomal subunit (SSU) binds messenger RNAs (mRNAs) and translates the encoded message by selecting cognate aminoacyl-transfer RNA (tRNA) molecules. The large subunit (LSU) contains the ribosomal catalytic site termed the peptidyl transferase center (PTC), which catalyzes the formation of peptide bonds, thereby polymerizing the amino acids delivered by tRNAs into a polypeptide chain. The nascent polypeptides leave the ribosome through a tunnel in the LSU and interact with protein factors that function in enzymatic processing, targeting, and the membrane insertion of nascent chains at the exit of the ribosomal tunnel. In Saccharomyces cerevisiae (strain ATCC 204508 / S288c) (Baker's yeast), this protein is Small ribosomal subunit protein eS12.